We begin with the raw amino-acid sequence, 259 residues long: Imidazole glycerol phosphate synthase subunit HisF (259 aa).

Active-site residues include aspartate 11 and aspartate 130.

Belongs to the HisA/HisF family. In terms of assembly, heterodimer of HisH and HisF.

It localises to the cytoplasm. The enzyme catalyses 5-[(5-phospho-1-deoxy-D-ribulos-1-ylimino)methylamino]-1-(5-phospho-beta-D-ribosyl)imidazole-4-carboxamide + L-glutamine = D-erythro-1-(imidazol-4-yl)glycerol 3-phosphate + 5-amino-1-(5-phospho-beta-D-ribosyl)imidazole-4-carboxamide + L-glutamate + H(+). Its pathway is amino-acid biosynthesis; L-histidine biosynthesis; L-histidine from 5-phospho-alpha-D-ribose 1-diphosphate: step 5/9. Its function is as follows. IGPS catalyzes the conversion of PRFAR and glutamine to IGP, AICAR and glutamate. The HisF subunit catalyzes the cyclization activity that produces IGP and AICAR from PRFAR using the ammonia provided by the HisH subunit. The polypeptide is Imidazole glycerol phosphate synthase subunit HisF (Carboxydothermus hydrogenoformans (strain ATCC BAA-161 / DSM 6008 / Z-2901)).